The sequence spans 488 residues: V-type proton ATPase subunit B 1 (488 aa).

This sequence belongs to the ATPase alpha/beta chains family. V-ATPase is a heteromultimeric enzyme composed of a peripheral catalytic V1 complex (main components: subunits A, B, C, D, E, and F) attached to an integral membrane V0 proton pore complex (main component: the proteolipid protein).

Functionally, non-catalytic subunit of the peripheral V1 complex of vacuolar ATPase. V-ATPase is responsible for acidifying a variety of intracellular compartments in eukaryotic cells. The polypeptide is V-type proton ATPase subunit B 1 (Gossypium hirsutum (Upland cotton)).